The chain runs to 357 residues: Peptide chain release factor 1 (357 aa).

Gln234 is modified (N5-methylglutamine).

The protein belongs to the prokaryotic/mitochondrial release factor family. Post-translationally, methylated by PrmC. Methylation increases the termination efficiency of RF1.

It localises to the cytoplasm. In terms of biological role, peptide chain release factor 1 directs the termination of translation in response to the peptide chain termination codons UAG and UAA. The chain is Peptide chain release factor 1 from Alkaliphilus oremlandii (strain OhILAs) (Clostridium oremlandii (strain OhILAs)).